A 483-amino-acid chain; its full sequence is 2-methylcitrate dehydratase (483 aa).

The protein belongs to the PrpD family. As to quaternary structure, monomer.

The catalysed reaction is (2S,3S)-2-methylcitrate = 2-methyl-cis-aconitate + H2O. The enzyme catalyses citrate = D-threo-isocitrate. The protein operates within organic acid metabolism; propanoate degradation. Its pathway is carbohydrate metabolism; tricarboxylic acid cycle; isocitrate from oxaloacetate: step 2/2. Involved in the catabolism of short chain fatty acids (SCFA) via the tricarboxylic acid (TCA)(acetyl degradation route) and via the 2-methylcitrate cycle I (propionate degradation route). Catalyzes the dehydration of 2-methylcitrate (2-MC) to yield the cis isomer of 2-methyl-aconitate. It is also able to catalyze the dehydration of citrate and the hydration of cis-aconitate at a lower rate. Due to its broad substrate specificity, it seems to be responsible for the residual aconitase activity of the acnAB-null mutant. The sequence is that of 2-methylcitrate dehydratase from Escherichia coli (strain K12).